The chain runs to 460 residues: Rab-3A-interacting protein (460 aa).

A phosphoserine mark is found at Ser-147, Ser-149, Ser-247, Ser-250, Ser-272, and Ser-280. Residues 149-244 (SVLEVREKGY…EVAALKTLVL (96 aa)) are a coiled coil. The interval 246–280 (SSPTSPTQEPLAAGKTPFKRGHTRNKSTSSAMSGS) is disordered. Positions 271–280 (KSTSSAMSGS) are enriched in polar residues.

Belongs to the SEC2 family. In terms of assembly, homodimer. Interacts with the N-terminal region of SSX2. Interacts with the GDP-bound forms of RAB8A and RAB8B. The interaction with RAB8A is prevented by phosphorylation of RAB8A at 'Thr-72'. Interacts with the GDP-bound forms of RAB3A and RAB3D. Interacts with DCDC1. Interacts (via the N-terminal region) with TRAPPC14; this interaction mediates RAB3IP association with the TRAPP II complex. Forms a heterotetramer with RAB11A where RAB3IP homodimer binds two RAB11A subunits. Forms a complex with RAB11A and RAB11FIP3, probably a heterohexamer with two of each protein subunit, where Rabin8/RAB3IP and RAB11FIP3 simultaneously bind to RAB11A; the complex promotes preciliary trafficking. Forms a complex containing RAB11A, ASAP1, RAB3IP, RAP11FIP3 and ARF4; the complex promotes preciliary trafficking; the complex binds to RHO in photoreceptor cells and promotes RHO ciliary transport. As to expression, ubiquitously expressed. Expressed at highest level in testis.

The protein localises to the cytoplasm. It is found in the nucleus. Its subcellular location is the cytoskeleton. It localises to the cell projection. The protein resides in the lamellipodium. Its function is as follows. Guanine nucleotide exchange factor (GEF) which may activate RAB8A and RAB8B. Promotes the exchange of GDP to GTP, converting inactive GDP-bound Rab proteins into their active GTP-bound form. Mediates the release of GDP from RAB8A and RAB8B but not from RAB3A or RAB5. Modulates actin organization and promotes polarized transport of RAB8A-specific vesicles to the cell surface. Together with RAB11A, RAB8A, the exocyst complex, PARD3, PRKCI, ANXA2, CDC42 and DNMBP promotes transcytosis of PODXL to the apical membrane initiation sites (AMIS), apical surface formation and lumenogenesis. Together with RAB11A and FIP3/RAB11FIP3, parts of the ciliary targeting complex that promotes preciliary vesicle trafficking to mother centriole and ciliogenesis initiation. Part of the ciliary targeting complex containing Rab11, ASAP1, RAB3IP and RAB11FIP3 and ARF4 that promotes RAB3IP preciliary vesicle trafficking to mother centriole and ciliogenesis initiation. In Rattus norvegicus (Rat), this protein is Rab-3A-interacting protein (Rab3ip).